A 262-amino-acid chain; its full sequence is Ribosomal RNA small subunit methyltransferase G (262 aa).

S-adenosyl-L-methionine-binding residues include Gly72, Leu77, and Arg142. Positions 212–262 (RSSQLSRAEGRKGRGDGERHDGRQVRRTARDSRRSREVDRDQPTRGQSRST) are disordered. The segment covering 219-254 (AEGRKGRGDGERHDGRQVRRTARDSRRSREVDRDQP) has biased composition (basic and acidic residues).

Belongs to the methyltransferase superfamily. RNA methyltransferase RsmG family.

Its subcellular location is the cytoplasm. In terms of biological role, specifically methylates the N7 position of guanine in position 518 of 16S rRNA. This is Ribosomal RNA small subunit methyltransferase G from Frankia alni (strain DSM 45986 / CECT 9034 / ACN14a).